The following is a 282-amino-acid chain: 2-dehydro-3-deoxyphosphooctonate aldolase (282 aa).

This sequence belongs to the KdsA family.

Its subcellular location is the cytoplasm. The catalysed reaction is D-arabinose 5-phosphate + phosphoenolpyruvate + H2O = 3-deoxy-alpha-D-manno-2-octulosonate-8-phosphate + phosphate. Its pathway is carbohydrate biosynthesis; 3-deoxy-D-manno-octulosonate biosynthesis; 3-deoxy-D-manno-octulosonate from D-ribulose 5-phosphate: step 2/3. It participates in bacterial outer membrane biogenesis; lipopolysaccharide biosynthesis. This is 2-dehydro-3-deoxyphosphooctonate aldolase from Agrobacterium fabrum (strain C58 / ATCC 33970) (Agrobacterium tumefaciens (strain C58)).